Here is a 391-residue protein sequence, read N- to C-terminus: MAIINMSDLDLQGKRVLIREDLNVPVSNGVVTSDARLRASLPTIELALAKGAAVMVMSHLGRPTEGEYNSEFSMQPVVDYLAKALSSPVRLATDYLDGVEVAVGEVVVFENVRFNKGEKKNDEALSKKMAALCDVYVMDAFGTAHRAEASTNGVGLYAPIACAGPLLAQELNALGKALDNPARPMVAIVGGSKVSTKLTVLESLSGIVDQLVVGGGIANTFIAAAGHNVGKSLYEADLIDEAKRLVANAQSRGGDIPVPTDVVVAGEFSPTATATLKSVSDVSDSDMIFDIGPDSAEALAKIIESAGTIVWNGPVGVFEFDQFGEGTKRIAQAIADSKAFSIAGGGDTLAAVDKYGIADKVSYISTGGGAFLEFLEGKELPAVAMLKKRGA.

Residues 21–23, Arg-36, 59–62, Arg-113, and Arg-146 each bind substrate; these read DLN and HLGR. ATP contacts are provided by residues Lys-197, Glu-319, and 345 to 348; that span reads GGDT.

This sequence belongs to the phosphoglycerate kinase family. In terms of assembly, monomer.

The protein resides in the cytoplasm. The enzyme catalyses (2R)-3-phosphoglycerate + ATP = (2R)-3-phospho-glyceroyl phosphate + ADP. Its pathway is carbohydrate degradation; glycolysis; pyruvate from D-glyceraldehyde 3-phosphate: step 2/5. This Shewanella putrefaciens (strain CN-32 / ATCC BAA-453) protein is Phosphoglycerate kinase.